A 702-amino-acid chain; its full sequence is Methionine--tRNA ligase (702 aa).

Residues 14-24 carry the 'HIGH' region motif; that stretch reads PYANGPVHLGH. Zn(2+) is bound by residues cysteine 146, cysteine 149, cysteine 159, and cysteine 162. Positions 344–348 match the 'KMSKS' region motif; the sequence is KFSKS. ATP is bound at residue lysine 347. The tRNA-binding domain maps to 601–702; the sequence is DFQKVDLRVA…GEKINGQSVQ (102 aa).

Belongs to the class-I aminoacyl-tRNA synthetase family. MetG type 1 subfamily. As to quaternary structure, homodimer. Zn(2+) serves as cofactor.

The protein resides in the cytoplasm. It carries out the reaction tRNA(Met) + L-methionine + ATP = L-methionyl-tRNA(Met) + AMP + diphosphate. Functionally, is required not only for elongation of protein synthesis but also for the initiation of all mRNA translation through initiator tRNA(fMet) aminoacylation. The protein is Methionine--tRNA ligase of Chlorobium luteolum (strain DSM 273 / BCRC 81028 / 2530) (Pelodictyon luteolum).